The chain runs to 91 residues: C-C motif chemokine 5 (91 aa).

The first 23 residues, 1–23 (MKISAAVLTVVLMAASLCAPASA), serve as a signal peptide directing secretion. 2 cysteine pairs are disulfide-bonded: Cys33–Cys57 and Cys34–Cys73.

Belongs to the intercrine beta (chemokine CC) family.

It localises to the secreted. Chemoattractant for blood monocytes, memory T-helper cells and eosinophils. Causes the release of histamine from basophils and activates eosinophils. May activate several chemokine receptors including CCR1, CCR3, CCR4 and CCR5. May also be an agonist of the G protein-coupled receptor GPR75. Together with GPR75, may play a role in neuron survival through activation of a downstream signaling pathway involving the PI3, Akt and MAP kinases. By activating GPR75 may also play a role in insulin secretion by islet cells. The protein is C-C motif chemokine 5 (CCL5) of Sigmodon hispidus (Hispid cotton rat).